The primary structure comprises 236 residues: Small ribosomal subunit protein uS2c (236 aa).

This sequence belongs to the universal ribosomal protein uS2 family.

Its subcellular location is the plastid. It localises to the chloroplast. The sequence is that of Small ribosomal subunit protein uS2c (rps2) from Phalaenopsis aphrodite subsp. formosana (Moth orchid).